The chain runs to 330 residues: Glycerol-3-phosphate dehydrogenase [NAD(P)+] (330 aa).

The NADPH site is built by W11, R33, and K105. K105, G133, and S135 together coordinate sn-glycerol 3-phosphate. A137 contributes to the NADPH binding site. Residues K188, D241, S251, R252, and N253 each coordinate sn-glycerol 3-phosphate. K188 (proton acceptor) is an active-site residue. Residue R252 participates in NADPH binding. NADPH is bound by residues V276 and E278.

Belongs to the NAD-dependent glycerol-3-phosphate dehydrogenase family.

It is found in the cytoplasm. It carries out the reaction sn-glycerol 3-phosphate + NAD(+) = dihydroxyacetone phosphate + NADH + H(+). It catalyses the reaction sn-glycerol 3-phosphate + NADP(+) = dihydroxyacetone phosphate + NADPH + H(+). The protein operates within membrane lipid metabolism; glycerophospholipid metabolism. Catalyzes the reduction of the glycolytic intermediate dihydroxyacetone phosphate (DHAP) to sn-glycerol 3-phosphate (G3P), the key precursor for phospholipid synthesis. The polypeptide is Glycerol-3-phosphate dehydrogenase [NAD(P)+] (Acidovorax ebreus (strain TPSY) (Diaphorobacter sp. (strain TPSY))).